Here is a 198-residue protein sequence, read N- to C-terminus: Cyclin-dependent kinase inhibitor 1B (198 aa).

Positions 1-11 (MSNVRVSNGSP) are enriched in polar residues. Positions 1–22 (MSNVRVSNGSPSLERMDARQAE) are disordered. Phosphoserine; by UHMK1 is present on Ser-10. The interaction with CDK2 stretch occupies residues 51–91 (DMEEASQRKWNFDFQNHKPLEGKYEWQEVEKGSLPEFYYRP). Tyr-74 is modified (phosphotyrosine; by SRC). The segment at 87–198 (FYYRPPRPPK…KKPGLRRRQT (112 aa)) is disordered. Phosphotyrosine; by ABL, LYN and SRC is present on Tyr-88. At Tyr-89 the chain carries Phosphotyrosine. Residues 104 to 113 (QESQDVSGNR) are compositionally biased toward polar residues. The segment covering 126–137 (EDTHLVDQKTDT) has biased composition (basic and acidic residues). A Nuclear localization signal motif is present at residues 153-169 (KRPATDDSSPQNKRANR). Thr-157 carries the post-translational modification Phosphothreonine; by CaMK1, PKB/AKT1 and PIM1. Thr-170 is subject to Phosphothreonine. A compositionally biased stretch (polar residues) spans 175-186 (SDGSPNAGSVEQ). Thr-187 bears the Phosphothreonine; by PKB/AKT1, CDK1 and CDK2 mark. Thr-198 carries the post-translational modification Phosphothreonine; by CaMK1, PKB/AKT1, RPS6KA1, RPS6KA3 and PIM1.

Belongs to the CDI family. Forms a ternary complex composed of CCNE1, CDK2 and CDKN1B. Interacts directly with CCNE1; the interaction is inhibited by CDK2-dependent phosphorylation on Thr-187. Interacts with COPS5, subunit of the COP9 signalosome complex; the interaction leads to CDKN1B degradation. Interacts with NUP50; the interaction leads to nuclear import and degradation of phosphorylated CDKN1B. Interacts with CCND1 and SNX6. Interacts (Thr-198-phosphorylated form) with 14-3-3 proteins, binds strongly YWHAQ, weakly YWHAE and YWHAH, but not YWHAB nor YWHAZ; the interaction with YWHAQ results in translocation to the cytoplasm. Interacts with AKT1 and LYN; the interactions lead to cytoplasmic mislocation, phosphorylation of CDKN1B and inhibition of cell cycle arrest. Forms a ternary complex with CCNA2 and CDK2; CDKN1B inhibits the kinase activity of CDK2 through conformational rearrangements. Interacts (unphosphorylated form) with CDK2. Forms a complex with CDK2 and SPDYA, but does not directly interact with SPDYA. Forms a ternary complex composed of cyclin D, CDK4 and CDKN1B. Interacts (phosphorylated on Tyr-88 and Tyr-89) with CDK4; the interaction is required for cyclin D and CDK4 complex assembly, induces nuclear translocation and activates the CDK4 kinase activity. Interacts with GRB2. Interacts with PIM1. Identified in a complex with SKP1, SKP2 and CKS1B. Interacts with UHMK1; the interaction leads to cytoplasmic mislocation, phosphorylation of CDKN1B and inhibition of cell cycle arrest. Also interacts with CDK1. Dephosphorylated on Thr-187 by PPM1H, leading to CDKN1B stability. Phosphorylated; phosphorylation occurs on serine, threonine and tyrosine residues. Phosphorylation on Ser-10 is the major site of phosphorylation in resting cells, takes place at the G(0)-G(1) phase and leads to protein stability. Phosphorylation on other sites is greatly enhanced by mitogens, growth factors, cMYC and in certain cancer cell lines. The phosphorylated form found in the cytoplasm is inactivate. Phosphorylation on Thr-198 is required for interaction with 14-3-3 proteins. Phosphorylation on Thr-187, by CDK1 and CDK2 leads to protein ubiquitination and proteasomal degradation. Tyrosine phosphorylation promotes this process. Phosphorylation by PKB/AKT1 can be suppressed by LY294002, an inhibitor of the catalytic subunit of PI3K. Phosphorylation on Tyr-88 and Tyr-89 has no effect on binding CDK2, but is required for binding CDK4. Dephosphorylated on tyrosine residues by G-CSF. Dephosphorylated on Thr-187 by PPM1H, leading to CDKN1B stability. In terms of processing, ubiquitinated; in the cytoplasm by the KPC complex (composed of RNF123/KPC1 and UBAC1/KPC2) and, in the nucleus, by SCF(SKP2). The latter requires prior phosphorylation on Thr-187. Ubiquitinated; by a TRIM21-containing SCF(SKP2)-like complex; leads to its degradation. Post-translationally, subject to degradation in the lysosome. Interaction with SNX6 promotes lysosomal degradation.

The protein localises to the nucleus. Its subcellular location is the cytoplasm. It localises to the endosome. Important regulator of cell cycle progression. Inhibits the kinase activity of CDK2 bound to cyclin A, but has little inhibitory activity on CDK2 bound to SPDYA. Involved in G1 arrest. Potent inhibitor of cyclin E- and cyclin A-CDK2 complexes. Forms a complex with cyclin type D-CDK4 complexes and is involved in the assembly, stability, and modulation of CCND1-CDK4 complex activation. Acts either as an inhibitor or an activator of cyclin type D-CDK4 complexes depending on its phosphorylation state and/or stoichometry. The protein is Cyclin-dependent kinase inhibitor 1B (CDKN1B) of Felis catus (Cat).